A 152-amino-acid polypeptide reads, in one-letter code: Deoxyuridine 5'-triphosphate nucleotidohydrolase (152 aa).

Residues 71–73 (RSG), Asn84, 88–90 (LID), and Met98 each bind substrate.

Belongs to the dUTPase family. Mg(2+) is required as a cofactor.

The enzyme catalyses dUTP + H2O = dUMP + diphosphate + H(+). It functions in the pathway pyrimidine metabolism; dUMP biosynthesis; dUMP from dCTP (dUTP route): step 2/2. Functionally, this enzyme is involved in nucleotide metabolism: it produces dUMP, the immediate precursor of thymidine nucleotides and it decreases the intracellular concentration of dUTP so that uracil cannot be incorporated into DNA. This is Deoxyuridine 5'-triphosphate nucleotidohydrolase from Klebsiella pneumoniae subsp. pneumoniae (strain ATCC 700721 / MGH 78578).